The primary structure comprises 359 residues: Methylthioribose-1-phosphate isomerase (359 aa).

Substrate is bound by residues 52–54, Arg90, and Gln200; that span reads RGA. The active-site Proton donor is Asp241. 251–252 contacts substrate; the sequence is NK.

The protein belongs to the eIF-2B alpha/beta/delta subunits family. MtnA subfamily.

The catalysed reaction is 5-(methylsulfanyl)-alpha-D-ribose 1-phosphate = 5-(methylsulfanyl)-D-ribulose 1-phosphate. It functions in the pathway amino-acid biosynthesis; L-methionine biosynthesis via salvage pathway; L-methionine from S-methyl-5-thio-alpha-D-ribose 1-phosphate: step 1/6. Catalyzes the interconversion of methylthioribose-1-phosphate (MTR-1-P) into methylthioribulose-1-phosphate (MTRu-1-P). In Sulfurimonas denitrificans (strain ATCC 33889 / DSM 1251) (Thiomicrospira denitrificans (strain ATCC 33889 / DSM 1251)), this protein is Methylthioribose-1-phosphate isomerase.